The following is a 215-amino-acid chain: Large ribosomal subunit protein uL3 (215 aa).

The segment at 136 to 161 is disordered; the sequence is GVSISHRSHGSTGQRQDPGKVFKGKK. At Gln-151 the chain carries N5-methylglutamine.

It belongs to the universal ribosomal protein uL3 family. Part of the 50S ribosomal subunit. Forms a cluster with proteins L14 and L19. Methylated by PrmB.

In terms of biological role, one of the primary rRNA binding proteins, it binds directly near the 3'-end of the 23S rRNA, where it nucleates assembly of the 50S subunit. This is Large ribosomal subunit protein uL3 from Rickettsia akari (strain Hartford).